A 374-amino-acid polypeptide reads, in one-letter code: S-adenosylmethionine synthase 2 (374 aa).

E11 contributes to the Mg(2+) binding site. Residue H17 coordinates ATP. K(+) is bound at residue E45. L-methionine-binding residues include E58 and Q101. Residues 169–171, 237–240, D248, 254–255, A271, K275, and K279 contribute to the ATP site; these read DGK, SGRF, and RK. An L-methionine-binding site is contributed by D248. An L-methionine-binding site is contributed by K279.

Belongs to the AdoMet synthase family. Homotetramer. Mn(2+) serves as cofactor. It depends on Mg(2+) as a cofactor. Co(2+) is required as a cofactor. Requires K(+) as cofactor. In terms of tissue distribution, expressed in vegetative and reproductive tissues.

It localises to the cytoplasm. The enzyme catalyses L-methionine + ATP + H2O = S-adenosyl-L-methionine + phosphate + diphosphate. Its pathway is amino-acid biosynthesis; S-adenosyl-L-methionine biosynthesis; S-adenosyl-L-methionine from L-methionine: step 1/1. Functionally, catalyzes the formation of S-adenosylmethionine from methionine and ATP. The reaction comprises two steps that are both catalyzed by the same enzyme: formation of S-adenosylmethionine (AdoMet) and triphosphate, and subsequent hydrolysis of the triphosphate. The polypeptide is S-adenosylmethionine synthase 2 (SAMS2) (Pisum sativum (Garden pea)).